The following is a 97-amino-acid chain: Cystatin-A (97 aa).

Residue Met1 is modified to N-acetylmethionine. The Secondary area of contact motif lies at Gln46–Gly50.

It belongs to the cystatin family.

It is found in the cytoplasm. This is an intracellular thiol proteinase inhibitor. This is Cystatin-A (Csta) from Mus musculus (Mouse).